The chain runs to 219 residues: Protein P25 (219 aa).

Positions 57 to 62 (KRIRFR) match the Nuclear localization signal motif. The interval 103–146 (DPTRLDSSVNELLVSNGLVTHYDRVHNVPIHTDGFEVVDFTTVF) is transcription activation. A Nuclear export signal motif is present at residues 169-178 (VYMVCLVNTV).

The protein belongs to the benyvirus P25 protein family. As to quaternary structure, homooligomer.

It localises to the host cytoplasm. The protein resides in the host nucleus. Pathogenicity factor implicated in symptom exacerbation. Might function as transcription activator (Potential). The sequence is that of Protein P25 from Beet necrotic yellow vein virus (isolate Japan/S) (BNYVV).